Reading from the N-terminus, the 83-residue chain is U-actitoxin-Aeq6b (83 aa).

The signal sequence occupies residues 1 to 20 (MIYKAVFVCLVLVLLGDVFC). A propeptide spanning residues 21–36 (SPRNSGGGTLNDNPFE) is cleaved from the precursor. Proline 82 bears the Proline amide mark.

Contains 3 disulfide bonds. Expressed by acrorhagi.

The protein localises to the secreted. It localises to the nematocyst. Its function is as follows. Toxin. The sequence is that of U-actitoxin-Aeq6b from Actinia equina (Beadlet anemone).